We begin with the raw amino-acid sequence, 278 residues long: 2-succinyl-6-hydroxy-2,4-cyclohexadiene-1-carboxylate synthase (278 aa).

This sequence belongs to the AB hydrolase superfamily. MenH family. As to quaternary structure, monomer.

It carries out the reaction 5-enolpyruvoyl-6-hydroxy-2-succinyl-cyclohex-3-ene-1-carboxylate = (1R,6R)-6-hydroxy-2-succinyl-cyclohexa-2,4-diene-1-carboxylate + pyruvate. It functions in the pathway quinol/quinone metabolism; 1,4-dihydroxy-2-naphthoate biosynthesis; 1,4-dihydroxy-2-naphthoate from chorismate: step 3/7. It participates in quinol/quinone metabolism; menaquinone biosynthesis. Catalyzes a proton abstraction reaction that results in 2,5-elimination of pyruvate from 2-succinyl-5-enolpyruvyl-6-hydroxy-3-cyclohexene-1-carboxylate (SEPHCHC) and the formation of 2-succinyl-6-hydroxy-2,4-cyclohexadiene-1-carboxylate (SHCHC). The chain is 2-succinyl-6-hydroxy-2,4-cyclohexadiene-1-carboxylate synthase from Photorhabdus laumondii subsp. laumondii (strain DSM 15139 / CIP 105565 / TT01) (Photorhabdus luminescens subsp. laumondii).